The chain runs to 332 residues: Divalent cation transporter CmaX (332 aa).

Residues 1–277 (MQAYESGDER…MNRTMYLLGI (277 aa)) are Cytoplasmic-facing. The chain crosses the membrane as a helical span at residues 278–286 (ITGFFLPMS). The Periplasmic segment spans residues 287–307 (FVTGLLGINVGGIPGADAPHG). A helical transmembrane segment spans residues 308–323 (FWLACLLIGGVATFQW). At 324 to 332 (WVFRRLRWL) the chain is on the cytoplasmic side.

It belongs to the CorA metal ion transporter (MIT) (TC 1.A.35) family. Homopentamer.

The protein resides in the cell inner membrane. It carries out the reaction Zn(2+)(in) = Zn(2+)(out). The enzyme catalyses Cd(2+)(in) = Cd(2+)(out). The catalysed reaction is Ni(2+)(in) = Ni(2+)(out). It catalyses the reaction Co(2+)(in) = Co(2+)(out). Its function is as follows. Transports divalent cations including Zn(2+), Cd(2+), Ni(2+) and Co(2+). The proton gradient has a small influence on transport suggesting that the transport is probably not proton-dependent. This chain is Divalent cation transporter CmaX, found in Pseudomonas aeruginosa (strain ATCC 15692 / DSM 22644 / CIP 104116 / JCM 14847 / LMG 12228 / 1C / PRS 101 / PAO1).